Reading from the N-terminus, the 70-residue chain is Beta-defensin 107 (70 aa).

An N-terminal signal peptide occupies residues 1–26 (MPGAMKIFVFILAALILLAQIFQART). Intrachain disulfides connect Cys41–Cys55 and Cys45–Cys64.

It belongs to the beta-defensin family. Specifically expressed in testis.

The protein resides in the secreted. In terms of biological role, has antibacterial activity. The sequence is that of Beta-defensin 107 (DEFB107A) from Homo sapiens (Human).